Here is a 332-residue protein sequence, read N- to C-terminus: Tetraacyldisaccharide 4'-kinase (332 aa).

Residue 60–67 (TVGGTGKT) coordinates ATP.

It belongs to the LpxK family.

It catalyses the reaction a lipid A disaccharide + ATP = a lipid IVA + ADP + H(+). It functions in the pathway glycolipid biosynthesis; lipid IV(A) biosynthesis; lipid IV(A) from (3R)-3-hydroxytetradecanoyl-[acyl-carrier-protein] and UDP-N-acetyl-alpha-D-glucosamine: step 6/6. In terms of biological role, transfers the gamma-phosphate of ATP to the 4'-position of a tetraacyldisaccharide 1-phosphate intermediate (termed DS-1-P) to form tetraacyldisaccharide 1,4'-bis-phosphate (lipid IVA). In Pseudomonas aeruginosa (strain LESB58), this protein is Tetraacyldisaccharide 4'-kinase.